The chain runs to 72 residues: Conotoxin 3 (72 aa).

An N-terminal signal peptide occupies residues 1–22 (MKLTCVVIVAVLLLTACQLITA). A propeptide spanning residues 23-46 (DDSRGTQEHRALRSDTKLSMLTLR) is cleaved from the precursor. Cystine bridges form between C47–C61, C54–C64, and C60–C71.

The protein belongs to the conotoxin O1 superfamily. Expressed by the venom duct.

It localises to the secreted. In Conus striatus (Striated cone), this protein is Conotoxin 3.